Here is a 213-residue protein sequence, read N- to C-terminus: Proton-translocating ferredoxin:NAD(+) oxidoreductase complex subunit E (213 aa).

Transmembrane regions (helical) follow at residues Gly-11–Thr-31, Phe-39–Ile-59, Val-69–Ala-89, Leu-93–Ala-113, Phe-128–Ile-148, and Ala-170–Val-190.

It belongs to the NqrDE/RnfAE family. The complex is composed of six subunits: RnfA, RnfB, RnfC, RnfD, RnfE and RnfG.

The protein resides in the cell membrane. In terms of biological role, part of a membrane-bound complex that couples electron transfer with translocation of ions across the membrane. Couples electron transfer from reduced ferredoxin to NAD(+) with translocation of H(+) out of the cell. Essential for energy conservation during autotrophic growth. Contributes to ATP synthesis during heterotrophic growth. This is Proton-translocating ferredoxin:NAD(+) oxidoreductase complex subunit E from Clostridium ljungdahlii (strain ATCC 55383 / DSM 13528 / PETC).